Reading from the N-terminus, the 2226-residue chain is MPSKYGNGSGTGRFVKNSTIKSEFRNNGYNRAEVIDPSIANNPMLNDSIQKRELVNRIDQLDSIMGFDRIEHGEMDGAKPRRGWLVNMHATTIPTDEYLAGYSGVDYYFLDEEGGSFKATIRYDPYFYLVVIPGHESEVEEMLRKVLEPCSLKGLLRVAKEDLSLPNHLVGLKKTLVKLSFHNVVDLLSARRLLNPIIKDNKMKRDTRDIYQVMNFNNVNNANGTEIQTNFNDKSTEQIADPATLIDDIREYDVPYHVRVSIDEKIRVGKWYNVFVKHSEVRLEEDKEKIAFADPVILAFDIETTKAPLKFPDAKTDQIMMISYMIDGEGFLITNREIISEDIEDFEYTPKPEYPGLFTIFNEPDEKMVLVRFFEHIRDSRPTVIATFNGDFFDWPFVEKRTTFHDMDMFEEIGFAKDNEGEYKSKYCVHMDCYRWVKRDSYLPQGSQGLKAVTTAKLGYNPTELDPELMTPYAYEKPQLLSEYSVSDAVATYYLYYKYVHPFIFSLCTIIPLNPDEVLRKGTGTLCEMLLMVQAYENGIVLPNKHTEPIERFYDGHLLESETYVGGHVESLEAGVFRSDLPNDFKVDPTAVDEILGDLHNALKFCIEVENNKKVEDVENYDEVYNQIKDSLVNLRETPIRHENPLIFHVDVASMYPNIMTSNRLQPDSMKSEEDCAACDFNRPGKNCDRRLPWSWRGEYYPAEMNEYGMIKRTLQNETFPPAKPWLPAKTFDELSYSEQASLIKKRLSDYSRKVYHRIKQSKTVSREAIVCQRENPFYVDTVRSFRDRRYEFKTLVKVWKGKTAKIDKHDTIAKDEAKKMVVLYDSLQLAHKVILNSFYGYVMRKGSRWYSMEMAGITCLTGATIIQMARSLVERLGRPLELDTDGIWCILPKSFPENYYFKCKDGKNIFLEYPCSMLNYLVHDKFTNHQYQDLVDPNTFKYKTRSENSIFFEVDGPYKAMVLPTSKEEGKGLKKRYAVFNDDGSLAELKGFELKRRGELQLIKNFQSDIFKLFLDGDSLENCYKSVATVANNWLDVLDTKGGMLEDEDLIELICENRSMSKSLAEYGNQKSTSITTAKRLGEFLGEEMIKDAGLACKYIISSKPIGSPVTERAVPVSIFSSEKKEFFLKKWLKDPSLENFDPRSVIDWNYYYERLASVVQKIISIPAALQDIKNPVPRVPHPEWLQKKINSKEDSKQQSSISSFFGQATKKEVLQKSIKSIQDIEDFGELDASIPKGRVSKVTSRKRRNGKANNVSDSEEEERNNAILNGECPSMTEDYAGFLQYQKAKWKVQEKNRERRKKLFGSNAESSHRSSVGGIIRRQAENIAGSDWEILEYKADPSKPGDIKVYVSASNKVHSFTFHVPKKVYASFKTELSPKKAIRNCEIEKSTAVLPNGHDGSNLYKLTMPEETYLEESTKVESLLQDSNILGLYETQVGAVERAIIDLGNNIRFDDTKVGALGKGLKNGFNVKDLMKVERDSYLKRFGMDIIYFLHLVTNSYEFFTIFKSWENTASIFVLKPSANAQELPSNMDKIYREIFEAKKDRLGKMYSIIEYPDEMKFETTYFHDTAKIFKKMDNCISKIYESRSNRALLAVQSPYTTKVLNLLKSTSSFPTIKMNVSELSLPAVGWQSLIIKRVVNHYFVLASWIKKLISLAKYGNVPLCNLQIENMGYLIDIEYARRLSQSNIVLWLSSRPLPDHGGFEMDKAQDFENLEFPTINNPEIYETACLEVEIGTLTINTILTSALINEAEGTDLADDAVQFDNNNGASTIAEDSFSTPALSILRGMVKDWWDDALKNNDNADSMMNNLVTWVQRSDSLLYDYSLHYHVHNLTTKALLQLIGEFKRMNAQVIFANRNKMLIQTTKVSIENSYAYGQYILKAARSKPLFNFLDLRIVKYWDLLVWMDEYNFGGRCCTEITNDEVQNLIPVNKWQITKFLPVIFQNEFEDWLIIFLDSLTKFKNDTLIPGTQTGTPRVTQIAHILKGQKKLDSNETEEESISNGVMELFRKPLQKRIEKLARRQNESILNPELRQEYEFPKLPGSYTSMKNPSLELVKFLCAVFGLSRKRNIEVRLLRRELLSIFDIKEFSDEAAFKNPSSSLKIPHVICDYCNYIRDIDFCRDEQKNIWNCSNCNKTYNRVAIEEELVAQYNKLLTKFYIQDLKCSKCHQIKSDNMSEYCKCSGKWTETLKYTEVDKRLQIFSNVGGFFNLQLLKGIIEELAL.

The disordered stretch occupies residues 1240 to 1265 (RVSKVTSRKRRNGKANNVSDSEEEER). 4 residues coordinate Zn(2+): Cys-2112, Cys-2115, Cys-2134, and Cys-2137. Residues 2112-2137 (CDYCNYIRDIDFCRDEQKNIWNCSNC) form a CysA-type zinc finger. Cys-2168, Cys-2171, Cys-2183, and Cys-2185 together coordinate [4Fe-4S] cluster. Positions 2168-2185 (CSKCHQIKSDNMSEYCKC) match the CysB motif motif.

It belongs to the DNA polymerase type-B family. As to quaternary structure, heterotetramer. Consists of 4 subunits: POL2, DPB2, DPB3 and DPB4. [4Fe-4S] cluster is required as a cofactor.

The protein resides in the nucleus. The enzyme catalyses DNA(n) + a 2'-deoxyribonucleoside 5'-triphosphate = DNA(n+1) + diphosphate. DNA polymerase II participates in chromosomal DNA replication. The polypeptide is DNA polymerase epsilon catalytic subunit A (POL2) (Debaryomyces hansenii (strain ATCC 36239 / CBS 767 / BCRC 21394 / JCM 1990 / NBRC 0083 / IGC 2968) (Yeast)).